We begin with the raw amino-acid sequence, 229 residues long: Heptaprenylglyceryl phosphate synthase (229 aa).

K12 is a sn-glycerol 1-phosphate binding site. Mg(2+) contacts are provided by D14 and S40. Sn-glycerol 1-phosphate-binding positions include 159–164 (YLEYSG), G189, and 209–210 (GN).

Belongs to the GGGP/HepGP synthase family. Group I subfamily. In terms of assembly, homodimer. Mg(2+) serves as cofactor.

It catalyses the reaction sn-glycerol 1-phosphate + all-trans-heptaprenyl diphosphate = 3-heptaprenyl-sn-glycero-1-phosphate + diphosphate. Its pathway is membrane lipid metabolism; glycerophospholipid metabolism. Its function is as follows. Prenyltransferase that catalyzes in vivo the transfer of the heptaprenyl moiety of heptaprenyl pyrophosphate (HepPP; 35 carbon atoms) to the C3 hydroxyl of sn-glycerol-1-phosphate (G1P), producing heptaprenylglyceryl phosphate (HepGP). This reaction is an ether-bond-formation step in the biosynthesis of archaea-type G1P-based membrane lipids found in Bacillales. The sequence is that of Heptaprenylglyceryl phosphate synthase from Bacillus velezensis (strain DSM 23117 / BGSC 10A6 / LMG 26770 / FZB42) (Bacillus amyloliquefaciens subsp. plantarum).